Reading from the N-terminus, the 525-residue chain is Glucans biosynthesis protein G (525 aa).

A signal peptide spans 1–35; that stretch reads MIFRSVSNTDFRARVRTLLLAGSTALAFVAAPVWA.

Belongs to the OpgD/OpgG family.

It localises to the periplasm. It functions in the pathway glycan metabolism; osmoregulated periplasmic glucan (OPG) biosynthesis. Functionally, involved in the biosynthesis of osmoregulated periplasmic glucans (OPGs). The polypeptide is Glucans biosynthesis protein G (Pseudomonas paraeruginosa (strain DSM 24068 / PA7) (Pseudomonas aeruginosa (strain PA7))).